Here is a 542-residue protein sequence, read N- to C-terminus: Putative selenium-binding protein (542 aa).

It belongs to the selenium-binding protein family.

This is Putative selenium-binding protein from Caenorhabditis elegans.